The chain runs to 522 residues: Glucans biosynthesis protein G (522 aa).

Residues 1-33 (MLVNILSKKPRAASVRWLGATVLFTLLTSPAWA) form the signal peptide.

Belongs to the OpgD/OpgG family.

Its subcellular location is the periplasm. It functions in the pathway glycan metabolism; osmoregulated periplasmic glucan (OPG) biosynthesis. In terms of biological role, involved in the biosynthesis of osmoregulated periplasmic glucans (OPGs). In Serratia proteamaculans (strain 568), this protein is Glucans biosynthesis protein G.